A 312-amino-acid chain; its full sequence is tRNA pseudouridine synthase B (312 aa).

Catalysis depends on aspartate 38, which acts as the Nucleophile.

This sequence belongs to the pseudouridine synthase TruB family. Type 1 subfamily.

It catalyses the reaction uridine(55) in tRNA = pseudouridine(55) in tRNA. In terms of biological role, responsible for synthesis of pseudouridine from uracil-55 in the psi GC loop of transfer RNAs. This chain is tRNA pseudouridine synthase B, found in Syntrophus aciditrophicus (strain SB).